We begin with the raw amino-acid sequence, 96 residues long: Small ribosomal subunit protein bS6 (96 aa).

Belongs to the bacterial ribosomal protein bS6 family.

Functionally, binds together with bS18 to 16S ribosomal RNA. The polypeptide is Small ribosomal subunit protein bS6 (Cutibacterium acnes (strain DSM 16379 / KPA171202) (Propionibacterium acnes)).